The following is a 767-amino-acid chain: 5-methyltetrahydropteroyltriglutamate--homocysteine methyltransferase (767 aa).

Residues 17 to 20 and K117 contribute to the 5-methyltetrahydropteroyltri-L-glutamate site; that span reads RELK. Residues 441-443 and E494 each bind L-homocysteine; that span reads IGS. Residues 441-443 and E494 contribute to the L-methionine site; that span reads IGS. 5-methyltetrahydropteroyltri-L-glutamate is bound by residues 525–526 and W571; that span reads RC. L-homocysteine is bound at residue D609. L-methionine is bound at residue D609. E615 serves as a coordination point for 5-methyltetrahydropteroyltri-L-glutamate. Residues H652, C654, and E676 each contribute to the Zn(2+) site. H705 serves as the catalytic Proton donor. C737 contributes to the Zn(2+) binding site.

The protein belongs to the vitamin-B12 independent methionine synthase family. The cofactor is Zn(2+).

The catalysed reaction is 5-methyltetrahydropteroyltri-L-glutamate + L-homocysteine = tetrahydropteroyltri-L-glutamate + L-methionine. The protein operates within amino-acid biosynthesis; L-methionine biosynthesis via de novo pathway; L-methionine from L-homocysteine (MetE route): step 1/1. Its function is as follows. Catalyzes the transfer of a methyl group from 5-methyltetrahydrofolate to homocysteine resulting in methionine formation. The sequence is that of 5-methyltetrahydropteroyltriglutamate--homocysteine methyltransferase from Bifidobacterium longum (strain NCC 2705).